The chain runs to 452 residues: MQRRIMGIETEFGVTCTFHGHRRLSPDEVARYLFRRVVSWGRSSNVFLRNGARLYLDVGSHPEYATAECDSLVQLVTHDRAGEWVLEDLLVDAEQRLADEGIGGDIYLFKNNTDSAGNSYGCHENYLIVRAGEFSRISDVLLPFLVTRQLICGAGKVLQTPKAATYCLSQRAEHIWEGVSSATTRSRPIINTRDEPHADAEKYRRLHVIVGDSNMSETTTMLKVGTAALVLEMIESGVAFRDFSLDNPIRAIREVSHDVTGRRPVRLAGGRQASALDIQREYYTRAVEHLQTREPNAQIEQVVDLWGRQLDAVESQDFAKVDTEIDWVIKRKLFQRYQDRYDMELSHPKIAQLDLAYHDIKRGRGIFDLLQRKGLAARVTTDEEIAEAVDQPPQTTRARLRGEFISAAQEAGRDFTVDWVHLKLNDQAQRTVLCKDPFRAVDERVKRLIASM.

E9 serves as a coordination point for Mg(2+). Position 53 (R53) interacts with ATP. Mg(2+) is bound at residue Y55. D57 serves as the catalytic Proton acceptor. E63 contacts Mg(2+). The ATP site is built by T66 and W419.

It belongs to the Pup ligase/Pup deamidase family. Pup-conjugating enzyme subfamily.

The enzyme catalyses ATP + [prokaryotic ubiquitin-like protein]-L-glutamate + [protein]-L-lysine = ADP + phosphate + N(6)-([prokaryotic ubiquitin-like protein]-gamma-L-glutamyl)-[protein]-L-lysine.. The protein operates within protein degradation; proteasomal Pup-dependent pathway. Its pathway is protein modification; protein pupylation. In terms of biological role, catalyzes the covalent attachment of the prokaryotic ubiquitin-like protein modifier Pup to the proteasomal substrate proteins, thereby targeting them for proteasomal degradation. This tagging system is termed pupylation. The ligation reaction involves the side-chain carboxylate of the C-terminal glutamate of Pup and the side-chain amino group of a substrate lysine. This Mycobacterium tuberculosis (strain KZN 1435 / MDR) protein is Pup--protein ligase.